We begin with the raw amino-acid sequence, 400 residues long: Leukosialin (400 aa).

Residues 1–19 form the signal peptide; it reads MATLLLLLGVLVVSPDALG. Residues 20–253 are Extracellular-facing; it reads STTAVQTPTS…PFRNPDENSR (234 aa). Threonine 21, threonine 22, threonine 26, and threonine 28 each carry an O-linked (GalNAc...) threonine glycan. 2 stretches are compositionally biased toward polar residues: residues 21 to 51 and 58 to 112; these read TTAV…SITS and TGDQ…TPHA. Residues 21–224 form a disordered region; sequence TTAVQTPTSG…SSGASGPQVS (204 aa). 2 O-linked (GalNAc...) serine glycosylation sites follow: serine 29 and serine 35. Threonine 36 is a glycosylation site (O-linked (GalNAc...) threonine). Residues serine 37, serine 41, and serine 42 are each glycosylated (O-linked (GalNAc...) serine). 2 O-linked (GalNAc...) threonine glycosylation sites follow: threonine 46 and threonine 47. O-linked (GalNAc...) serine glycosylation occurs at serine 48. Threonine 50, threonine 58, and threonine 69 each carry an O-linked (GalNAc...) threonine glycan. O-linked (GalNAc...) serine glycans are attached at residues serine 99 and serine 103. Residues threonine 109 and threonine 113 are each glycosylated (O-linked (GalNAc...) threonine). A glycan (O-linked (GalNAc...) serine) is linked at serine 114. 2 stretches are compositionally biased toward polar residues: residues 121 to 164 and 172 to 182; these read TANS…SRGT and ATVSLETSKGT. O-linked (GalNAc...) threonine glycans are attached at residues threonine 136, threonine 137, threonine 173, and threonine 178. Residues 196-211 are compositionally biased toward low complexity; the sequence is TSTGTTGPPVTMTTGS. Over residues 212–224 the composition is skewed to polar residues; that stretch reads LEPSSGASGPQVS. Asparagine 239 carries N-linked (GlcNAc...) asparagine glycosylation. A helical membrane pass occupies residues 254-276; sequence GMLPVAVLVALLAVIVLVALLLL. Topologically, residues 277–400 are cytoplasmic; that stretch reads WRRRQKRRTG…EPEGGDGAAP (124 aa). The required for interaction with EZR, MSN and RDX and for co-localization to microvilli stretch occupies residues 278–308; it reads RRRQKRRTGALVLSRGGKRNGVVDAWAGPAQ. Residues 282 to 296 carry the Nuclear localization signal motif; that stretch reads KRRTGALVLSRGGKR. Phosphoserine is present on serine 291. The span at 320–332 shows a compositional bias: gly residues; that stretch reads GGSGGDKGSGFPD. The tract at residues 320 to 400 is disordered; that stretch reads GGSGGDKGSG…EPEGGDGAAP (81 aa). Serine 336 carries the phosphoserine modification. Position 341 is a phosphothreonine (threonine 341). Serine 351 carries the phosphoserine modification. Serine 355 carries the phosphoserine; by PKC/PRKCQ modification. Residues serine 368 and serine 379 each carry the phosphoserine modification.

Interacts with SIGLEC1. In terms of assembly, monomer. Interacts with CTNNB1. Interacts with RDX (via FERM domain), EZR and MSN. Glycosylated; has a high content of sialic acid and O-linked carbohydrate structures. Post-translationally, phosphorylation at Ser-355 is regulated by chemokines, requires its association with ERM proteins (EZR, RDX and MSN) and is essential for its function in the regulation of T-cell trafficking to lymph nodes. In terms of processing, has a high content of sialic acid and O-linked carbohydrate structures. Cleavage by CTSG releases its extracellular domain and triggers its intramembrane proteolysis by gamma-secretase releasing the CD43 cytoplasmic tail chain (CD43-ct) which translocates to the nucleus. Post-translationally, sumoylated. In terms of tissue distribution, cell surface of thymocytes, T-lymphocytes, neutrophils, plasma cells and myelomas.

It is found in the membrane. The protein resides in the cell projection. The protein localises to the microvillus. Its subcellular location is the uropodium. It localises to the nucleus. It is found in the PML body. In terms of biological role, predominant cell surface sialoprotein of leukocytes which regulates multiple T-cell functions, including T-cell activation, proliferation, differentiation, trafficking and migration. Positively regulates T-cell trafficking to lymph-nodes via its association with ERM proteins (EZR, RDX and MSN). Negatively regulates Th2 cell differentiation and predisposes the differentiation of T-cells towards a Th1 lineage commitment. Promotes the expression of IFN-gamma by T-cells during T-cell receptor (TCR) activation of naive cells and induces the expression of IFN-gamma by CD4(+) T-cells and to a lesser extent by CD8(+) T-cells. Plays a role in preparing T-cells for cytokine sensing and differentiation into effector cells by inducing the expression of cytokine receptors IFNGR and IL4R, promoting IFNGR and IL4R signaling and by mediating the clustering of IFNGR with TCR. Acts as a major E-selectin ligand responsible for Th17 cell rolling on activated vasculature and recruitment during inflammation. Mediates Th17 cells, but not Th1 cells, adhesion to E-selectin. Acts as a T-cell counter-receptor for SIGLEC1. Protects cells from apoptotic signals, promoting cell survival. The polypeptide is Leukosialin (SPN) (Homo sapiens (Human)).